Consider the following 96-residue polypeptide: Large ribosomal subunit protein eL21 (96 aa).

Positions 1-37 are disordered; that stretch reads MPSSNGPMTGTRDKLSNSPRERGMSPPQRAIQEYDEG. A compositionally biased stretch (basic and acidic residues) spans 11–23; it reads TRDKLSNSPRERG.

The protein belongs to the eukaryotic ribosomal protein eL21 family.

This Haloquadratum walsbyi (strain DSM 16790 / HBSQ001) protein is Large ribosomal subunit protein eL21.